Reading from the N-terminus, the 39-residue chain is ITCSKVYGDIISCVGYIKGGPIACVGYLKGGPLQQYVHN.

It belongs to the plant LTP family.

Functionally, plant non-specific lipid-transfer proteins transfer phospholipids as well as galactolipids across membranes. May play a role in wax or cutin deposition in the cell walls of expanding epidermal cells and certain secretory tissues. The sequence is that of Non-specific lipid-transfer protein from Musa acuminata (Banana).